Reading from the N-terminus, the 97-residue chain is Class II hydrophobin NC2 (97 aa).

The N-terminal stretch at 1 to 17 is a signal peptide; that stretch reads MQFTIATVLSLLTITLA. 4 cysteine pairs are disulfide-bonded: Cys31-Cys79, Cys40-Cys70, Cys41-Cys53, and Cys80-Cys91. An N-linked (GlcNAc...) asparagine glycan is attached at Asn62.

It belongs to the cerato-ulmin hydrophobin family. As to quaternary structure, homotrimer. Further self-assembles to form highly ordered films at water-air interfaces through intermolecular interactions.

It localises to the secreted. The protein localises to the cell wall. In terms of biological role, aerial growth, conidiation, and dispersal of filamentous fungi in the environment rely upon a capability of their secreting small amphipathic proteins called hydrophobins (HPBs) with low sequence identity. Class I can self-assemble into an outermost layer of rodlet bundles on aerial cell surfaces, conferring cellular hydrophobicity that supports fungal growth, development and dispersal; whereas Class II form highly ordered films at water-air interfaces through intermolecular interactions but contribute nothing to the rodlet structure. NC2 is a class II hydrophobin that has the potential to adsorb to the hydrophobic interface at the hydrophobic-hydrophilic interface at very high rate but the predicted self-assembly NC2 film possesses a lower flexural rigidity than other class II hydrophobins such as HFBII from Hypocrea jecorina (also known as Trichoderma reesei). This is Class II hydrophobin NC2 from Neurospora crassa (strain ATCC 24698 / 74-OR23-1A / CBS 708.71 / DSM 1257 / FGSC 987).